Consider the following 429-residue polypeptide: Queuine tRNA-ribosyltransferase accessory subunit 2 (429 aa).

Residues Cys-330, Cys-332, Cys-335, and His-361 each contribute to the Zn(2+) site.

The protein belongs to the queuine tRNA-ribosyltransferase family. QTRT2 subfamily. In terms of assembly, heterodimer of a catalytic subunit and an accessory subunit. Zn(2+) is required as a cofactor.

The protein resides in the cytoplasm. Non-catalytic subunit of the queuine tRNA-ribosyltransferase (TGT) that catalyzes the base-exchange of a guanine (G) residue with queuine (Q) at position 34 (anticodon wobble position) in tRNAs with GU(N) anticodons (tRNA-Asp, -Asn, -His and -Tyr), resulting in the hypermodified nucleoside queuosine (7-(((4,5-cis-dihydroxy-2-cyclopenten-1-yl)amino)methyl)-7-deazaguanosine). This Culex quinquefasciatus (Southern house mosquito) protein is Queuine tRNA-ribosyltransferase accessory subunit 2.